Consider the following 386-residue polypeptide: Cytochrome b (386 aa).

A run of 4 helical transmembrane segments spans residues 32–52 (FGSL…TLAM), 76–98 (WMIR…LHIG), 113–133 (PWSI…LGYV), and 179–199 (FFSL…MHLL). Positions 82 and 96 each coordinate heme b. Residues His-183 and His-197 each contribute to the heme b site. A ubiquinone is bound at residue His-202. 4 consecutive transmembrane segments (helical) span residues 225–245 (YTFK…LFLF), 289–309 (LGGV…PLLD), 321–341 (LMKF…WCGS), and 348–368 (FITL…IIVP).

This sequence belongs to the cytochrome b family. Fungal cytochrome b-c1 complex contains 10 subunits; 3 respiratory subunits, 2 core proteins and 5 low-molecular weight proteins. Cytochrome b-c1 complex is a homodimer. Requires heme b as cofactor.

It localises to the mitochondrion inner membrane. Its function is as follows. Component of the ubiquinol-cytochrome c reductase complex (complex III or cytochrome b-c1 complex) that is part of the mitochondrial respiratory chain. The b-c1 complex mediates electron transfer from ubiquinol to cytochrome c. Contributes to the generation of a proton gradient across the mitochondrial membrane that is then used for ATP synthesis. This is Cytochrome b (cob) from Rhizopus oryzae (Mucormycosis agent).